The sequence spans 366 residues: D-alanine--D-alanine ligase (366 aa).

Positions 150–353 (KRVLRDAGVP…YPALVDRLIV (204 aa)) constitute an ATP-grasp domain. 180–235 (IGQLGLPLFIKPASQGSSVGVSKVTDRAGFAAALALAFRYDAKVLVEQGISGREIE) is an ATP binding site. D307, E320, and N322 together coordinate Mg(2+).

It belongs to the D-alanine--D-alanine ligase family. Requires Mg(2+) as cofactor. The cofactor is Mn(2+).

It is found in the cytoplasm. The catalysed reaction is 2 D-alanine + ATP = D-alanyl-D-alanine + ADP + phosphate + H(+). It functions in the pathway cell wall biogenesis; peptidoglycan biosynthesis. Cell wall formation. In Sodalis glossinidius (strain morsitans), this protein is D-alanine--D-alanine ligase.